The chain runs to 562 residues: NAD-dependent malic enzyme (562 aa).

Tyr-101 functions as the Proton donor in the catalytic mechanism. Residue Arg-154 participates in NAD(+) binding. The active-site Proton acceptor is Lys-172. Glu-243, Asp-244, and Asp-267 together coordinate a divalent metal cation. The NAD(+) site is built by Asp-267 and Asn-415.

The protein belongs to the malic enzymes family. As to quaternary structure, homotetramer. It depends on Mg(2+) as a cofactor. The cofactor is Mn(2+).

The enzyme catalyses (S)-malate + NAD(+) = pyruvate + CO2 + NADH. It carries out the reaction oxaloacetate + H(+) = pyruvate + CO2. This Shewanella baltica (strain OS155 / ATCC BAA-1091) protein is NAD-dependent malic enzyme.